Consider the following 310-residue polypeptide: Glycerol-3-phosphate dehydrogenase [NAD(P)+] (310 aa).

Trp14, Arg34, Arg35, and Lys82 together coordinate NADPH. The sn-glycerol 3-phosphate site is built by Lys82 and Gly110. Residue Ser114 coordinates NADPH. Residues Lys165, Asp218, Ser228, Arg229, and Asn230 each contribute to the sn-glycerol 3-phosphate site. Lys165 functions as the Proton acceptor in the catalytic mechanism. Position 229 (Arg229) interacts with NADPH. Glu255 contributes to the NADPH binding site.

The protein belongs to the NAD-dependent glycerol-3-phosphate dehydrogenase family.

The protein resides in the cytoplasm. It catalyses the reaction sn-glycerol 3-phosphate + NAD(+) = dihydroxyacetone phosphate + NADH + H(+). The catalysed reaction is sn-glycerol 3-phosphate + NADP(+) = dihydroxyacetone phosphate + NADPH + H(+). Its pathway is membrane lipid metabolism; glycerophospholipid metabolism. In terms of biological role, catalyzes the reduction of the glycolytic intermediate dihydroxyacetone phosphate (DHAP) to sn-glycerol 3-phosphate (G3P), the key precursor for phospholipid synthesis. The polypeptide is Glycerol-3-phosphate dehydrogenase [NAD(P)+] (Acaryochloris marina (strain MBIC 11017)).